A 39-amino-acid polypeptide reads, in one-letter code: Photosystem II reaction center protein J (39 aa).

The helical transmembrane segment at 9–29 threads the bilayer; the sequence is LWMVATVGGLAAGGLLILFVF.

The protein belongs to the PsbJ family. As to quaternary structure, PSII is composed of 1 copy each of membrane proteins PsbA, PsbB, PsbC, PsbD, PsbE, PsbF, PsbH, PsbI, PsbJ, PsbK, PsbL, PsbM, PsbT, PsbX, PsbY, PsbZ, Psb30/Ycf12, at least 3 peripheral proteins of the oxygen-evolving complex and a large number of cofactors. It forms dimeric complexes.

Its subcellular location is the plastid. It is found in the chloroplast thylakoid membrane. One of the components of the core complex of photosystem II (PSII). PSII is a light-driven water:plastoquinone oxidoreductase that uses light energy to abstract electrons from H(2)O, generating O(2) and a proton gradient subsequently used for ATP formation. It consists of a core antenna complex that captures photons, and an electron transfer chain that converts photonic excitation into a charge separation. The protein is Photosystem II reaction center protein J of Emiliania huxleyi (Coccolithophore).